A 686-amino-acid chain; its full sequence is Envelope glycoprotein H (686 aa).

The first 24 residues, 1 to 24 (MPASSVRLPLRLLTLAGLLALAGA), serve as a signal peptide directing secretion. Residues 25-646 (AALARGAPQG…TSTRLAPVSP (622 aa)) lie on the Virion surface side of the membrane. Asn77, Asn162, Asn542, Asn604, and Asn627 each carry an N-linked (GlcNAc...) asparagine; by host glycan. An interaction with gL region spans residues 157–217 (PAAVFNVTLG…PPAGRFHVYT (61 aa)). Residues 647-667 (AYVVASVVGAAITVGILYALF) traverse the membrane as a helical segment. Over 668 to 686 (KMLCSFSSEGYSRLINARS) the chain is Intravirion.

It belongs to the herpesviridae glycoprotein H family. In terms of assembly, interacts with glycoprotein L (gL); this interaction is necessary for the correct processing and cell surface expression of gH. The heterodimer gH/gL seems to interact with gB trimers during fusion. N-glycosylated, O-glycosylated, and sialylated.

The protein localises to the virion membrane. It is found in the host cell membrane. The protein resides in the host endosome membrane. Functionally, the heterodimer glycoprotein H-glycoprotein L is required for the fusion of viral and plasma membranes leading to virus entry into the host cell. Following initial binding to host receptor, membrane fusion is mediated by the fusion machinery composed of gB and the heterodimer gH/gL. May also be involved in the fusion between the virion envelope and the outer nuclear membrane during virion morphogenesis. This Sus scrofa (Pig) protein is Envelope glycoprotein H.